Consider the following 508-residue polypeptide: Photosystem II CP47 reaction center protein (508 aa).

The next 6 membrane-spanning stretches (helical) occupy residues 21–36 (SVHL…WAGS), 101–115 (IVLS…IWHW), 140–156 (GIHL…FGAF), 203–218 (IAAG…FHLT), 237–252 (VLSS…AFVV), and 457–472 (CFAL…HGAR).

Belongs to the PsbB/PsbC family. PsbB subfamily. In terms of assembly, PSII is composed of 1 copy each of membrane proteins PsbA, PsbB, PsbC, PsbD, PsbE, PsbF, PsbH, PsbI, PsbJ, PsbK, PsbL, PsbM, PsbT, PsbX, PsbY, PsbZ, Psb30/Ycf12, at least 3 peripheral proteins of the oxygen-evolving complex and a large number of cofactors. It forms dimeric complexes. Binds multiple chlorophylls. PSII binds additional chlorophylls, carotenoids and specific lipids. serves as cofactor.

It is found in the plastid. Its subcellular location is the chloroplast thylakoid membrane. Functionally, one of the components of the core complex of photosystem II (PSII). It binds chlorophyll and helps catalyze the primary light-induced photochemical processes of PSII. PSII is a light-driven water:plastoquinone oxidoreductase, using light energy to abstract electrons from H(2)O, generating O(2) and a proton gradient subsequently used for ATP formation. This is Photosystem II CP47 reaction center protein from Chlorokybus atmophyticus (Soil alga).